The following is a 67-amino-acid chain: MPVRFSKVLIPQPKSKFIKTRCPDCGNEQITFSHAAMVVRCLVCGRVLAIPTGGKAKLAGHVVKVLE.

Cysteine 22, cysteine 25, cysteine 41, and cysteine 44 together coordinate Zn(2+). The C4-type zinc finger occupies 22-44 (CPDCGNEQITFSHAAMVVRCLVC).

Belongs to the eukaryotic ribosomal protein eS27 family. As to quaternary structure, part of the 30S ribosomal subunit. The cofactor is Zn(2+).

The sequence is that of Small ribosomal subunit protein eS27 from Pyrobaculum aerophilum (strain ATCC 51768 / DSM 7523 / JCM 9630 / CIP 104966 / NBRC 100827 / IM2).